A 100-amino-acid polypeptide reads, in one-letter code: Osteocalcin (100 aa).

The signal sequence occupies residues 1 to 23; it reads MRALTLLALLALAALCIAGQAGA. Positions 24–51 are excised as a propeptide; the sequence is KPSGAESSKGAAFVSKQEGSEVVKRPRR. A Gla domain is found at 52–98; the sequence is YLYQWLGAPVPYPDPLEPRREVCELNPDCDELADHIGFQEAYRRFYG. Glu68, Glu72, Glu75, and Asp81 together coordinate Ca(2+). Glu68 is subject to 4-carboxyglutamate; partial. 2 positions are modified to 4-carboxyglutamate: Glu72 and Glu75. Cys74 and Cys80 are oxidised to a cystine.

This sequence belongs to the osteocalcin/matrix Gla protein family. Post-translationally, gamma-carboxyglutamate residues are formed by vitamin K dependent carboxylation by GGCX. These residues are essential for the binding of calcium. Decarboxylation promotes the hormone activity.

The protein localises to the secreted. Its function is as follows. Bone protein that constitutes 1-2% of the total bone protein, and which acts as a negative regulator of bone formation. Functions to limit bone formation without impairing bone resorption or mineralization. It binds strongly to apatite and calcium. In terms of biological role, the uncarboxylated form acts as a hormone secreted by osteoblasts, which regulates different cellular processes, such as energy metabolism, male fertility and brain development. Regulates of energy metabolism by acting as a hormone favoring pancreatic beta-cell proliferation, insulin secretion and sensitivity and energy expenditure. Uncarboxylated osteocalcin hormone also promotes testosterone production in the testes: acts as a ligand for G protein-coupled receptor GPRC6A at the surface of Leydig cells, initiating a signaling response that promotes the expression of enzymes required for testosterone synthesis in a CREB-dependent manner. Also acts as a regulator of brain development: osteocalcin hormone crosses the blood-brain barrier and acts as a ligand for GPR158 on neurons, initiating a signaling response that prevents neuronal apoptosis in the hippocampus, favors the synthesis of all monoamine neurotransmitters and inhibits that of gamma-aminobutyric acid (GABA). Osteocalcin also crosses the placenta during pregnancy and maternal osteocalcin is required for fetal brain development. This Homo sapiens (Human) protein is Osteocalcin (BGLAP).